Reading from the N-terminus, the 874-residue chain is Alanine--tRNA ligase (874 aa).

Residues H564, H568, C665, and H669 each coordinate Zn(2+).

It belongs to the class-II aminoacyl-tRNA synthetase family. Zn(2+) serves as cofactor.

Its subcellular location is the cytoplasm. It carries out the reaction tRNA(Ala) + L-alanine + ATP = L-alanyl-tRNA(Ala) + AMP + diphosphate. Functionally, catalyzes the attachment of alanine to tRNA(Ala) in a two-step reaction: alanine is first activated by ATP to form Ala-AMP and then transferred to the acceptor end of tRNA(Ala). Also edits incorrectly charged Ser-tRNA(Ala) and Gly-tRNA(Ala) via its editing domain. This Acidovorax sp. (strain JS42) protein is Alanine--tRNA ligase.